The sequence spans 336 residues: Retinol dehydrogenase 10-B (336 aa).

A helical; Signal-anchor membrane pass occupies residues 7–27 (LFVVTFKIIWSFVLAGAKWFI). 40–64 (VITGAGSGLGRLFALEFARRRATLV) serves as a coordination point for NADP(+). Substrate is bound at residue S192. Y205 functions as the Proton acceptor in the catalytic mechanism.

This sequence belongs to the short-chain dehydrogenases/reductases (SDR) family.

The protein resides in the microsome membrane. Its subcellular location is the endoplasmic reticulum membrane. It catalyses the reaction all-trans-retinol + NADP(+) = all-trans-retinal + NADPH + H(+). It functions in the pathway cofactor metabolism; retinol metabolism. Its function is as follows. Retinol dehydrogenase with a clear preference for NADP. Converts all-trans-retinol to all-trans-retinal. Has no detectable activity towards 11-cis-retinol, 9-cis-retinol and 13-cis-retinol. The protein is Retinol dehydrogenase 10-B (rdh10b) of Danio rerio (Zebrafish).